The sequence spans 445 residues: UPF0210 protein SSU05_0296 (445 aa).

Belongs to the UPF0210 family. In terms of assembly, homodimer.

The sequence is that of UPF0210 protein SSU05_0296 from Streptococcus suis (strain 05ZYH33).